We begin with the raw amino-acid sequence, 362 residues long: Dihydroorotate dehydrogenase (quinone) (362 aa).

FMN contacts are provided by residues 62 to 66 (AGYDK) and Thr-86. A substrate-binding site is contributed by Lys-66. 111-115 (NRLGF) provides a ligand contact to substrate. The FMN site is built by Asn-139 and Asn-170. Asn-170 contributes to the substrate binding site. Ser-173 serves as the catalytic Nucleophile. Asn-175 provides a ligand contact to substrate. FMN is bound by residues Lys-215 and Ser-243. Position 244-245 (244-245 (NT)) interacts with substrate. FMN contacts are provided by residues Gly-266, Gly-295, and 316–317 (YS).

This sequence belongs to the dihydroorotate dehydrogenase family. Type 2 subfamily. As to quaternary structure, monomer. It depends on FMN as a cofactor.

It localises to the cell membrane. It catalyses the reaction (S)-dihydroorotate + a quinone = orotate + a quinol. The protein operates within pyrimidine metabolism; UMP biosynthesis via de novo pathway; orotate from (S)-dihydroorotate (quinone route): step 1/1. Catalyzes the conversion of dihydroorotate to orotate with quinone as electron acceptor. The chain is Dihydroorotate dehydrogenase (quinone) from Rhizobium etli (strain CIAT 652).